A 548-amino-acid chain; its full sequence is Poly(ADP-ribose) glycohydrolase 1 (548 aa).

It belongs to the poly(ADP-ribose) glycohydrolase family.

It carries out the reaction [(1''-&gt;2')-ADP-alpha-D-ribose](n) + H2O = [(1''-&gt;2')-ADP-alpha-D-ribose](n-1) + ADP-D-ribose. In terms of biological role, poly(ADP-ribose) synthesized after DNA damage is only present transiently and is rapidly degraded by poly(ADP-ribose) glycohydrolase. Involved in establishing period length of the circadian oscillator. May regulate post-translational poly(ADP-ribosyl)ation of an oscillator component. This chain is Poly(ADP-ribose) glycohydrolase 1 (PARG1), found in Arabidopsis thaliana (Mouse-ear cress).